Consider the following 635-residue polypeptide: DNA mismatch repair protein MutL (635 aa).

Belongs to the DNA mismatch repair MutL/HexB family.

Its function is as follows. This protein is involved in the repair of mismatches in DNA. It is required for dam-dependent methyl-directed DNA mismatch repair. May act as a 'molecular matchmaker', a protein that promotes the formation of a stable complex between two or more DNA-binding proteins in an ATP-dependent manner without itself being part of a final effector complex. The protein is DNA mismatch repair protein MutL of Yersinia pestis bv. Antiqua (strain Angola).